Here is a 591-residue protein sequence, read N- to C-terminus: N-acetylgalactosaminyltransferase 7 (591 aa).

Residues 1–11 lie on the Cytoplasmic side of the membrane; it reads MRVSTIRSGRI. Residues 12–29 form a helical; Signal-anchor for type II membrane protein membrane-spanning segment; the sequence is CRLALCLLVLLPLLYLLA. N30 carries N-linked (GlcNAc...) asparagine glycosylation. Topologically, residues 30-591 are lumenal; sequence NWSDHHKRVQ…WWFKEIRPRW (562 aa). The disordered stretch occupies residues 68–100; the sequence is DGLGNFEPKDVKPRSGPGENGEAHSLSPDKKHM. Disulfide bonds link C132–C367, C358–C441, C479–C496, C519–C532, and C558–C573. Positions 141–251 are catalytic subdomain A; the sequence is LPRTSVIIVF…TNWLPPLLAP (111 aa). 2 residues coordinate substrate: D182 and R212. Mn(2+) contacts are provided by D235 and H237. Positions 313–375 are catalytic subdomain B; it reads PYRSPTHAGG…PCSRVGHVYR (63 aa). Residue W344 coordinates substrate. Residue H372 coordinates Mn(2+). Substrate is bound by residues R375 and Y380. A Ricin B-type lectin domain is found at 466-585; it reads LHWGELRSVA…NDSYQQWWFK (120 aa). Residue N576 is glycosylated (N-linked (GlcNAc...) asparagine).

It belongs to the glycosyltransferase 2 family. GalNAc-T subfamily. Mn(2+) serves as cofactor. Expressed in developing oocytes and egg chambers. During embryonic stages 9-11, expressed in the primordium of the foregut, midgut and hindgut. Expressed in the salivary glands from embryonic stage 12 onwards. During embryonic stages 12-13, expressed in the posterior midgut and hindgut. During embryonic stages 14-15, expression continues in the hindgut. During embryonic stages 16-17, expressed in the antennomaxillary complex. In third instar larvae, ubiquitously expressed in wing, with increased expression in the notum and ventral wing pouch, eye-antennal, leg and haltere imaginal disks.

It is found in the golgi apparatus membrane. It catalyses the reaction L-seryl-[protein] + UDP-N-acetyl-alpha-D-galactosamine = a 3-O-[N-acetyl-alpha-D-galactosaminyl]-L-seryl-[protein] + UDP + H(+). The catalysed reaction is L-threonyl-[protein] + UDP-N-acetyl-alpha-D-galactosamine = a 3-O-[N-acetyl-alpha-D-galactosaminyl]-L-threonyl-[protein] + UDP + H(+). It functions in the pathway protein modification; protein glycosylation. Its function is as follows. Glycopeptide transferase involved in O-linked oligosaccharide biosynthesis, which catalyzes the transfer of an N-acetyl-D-galactosamine residue to an already glycosylated peptide. In contrast to other proteins of the family, it does not act as a peptide transferase that transfers GalNAc onto serine or threonine residue on the protein receptor, but instead requires the prior addition of a GalNAc on a peptide before adding additional GalNAc moieties. Some peptide transferase activity is however not excluded, considering that its appropriate peptide substrate may remain unidentified. Prefers the monoglycosylated Muc5AC-3 as substrate. Might have a role in protein O-glycosylation in the Golgi and thereby in establishing and/or maintaining a proper secretory apparatus structure. This chain is N-acetylgalactosaminyltransferase 7, found in Drosophila melanogaster (Fruit fly).